The following is a 233-amino-acid chain: Ribonuclease 3 (233 aa).

In terms of domain architecture, RNase III spans 4–126; sequence LNKLMERLGH…IVGAIYIDAG (123 aa). Mg(2+) is bound at residue Glu39. The active site involves Asp43. Mg(2+) is bound by residues Asp112 and Glu115. Residue Glu115 is part of the active site. One can recognise a DRBM domain in the interval 153–222; it reads DAKSLLQEWL…AKRFLELLDD (70 aa).

Belongs to the ribonuclease III family. In terms of assembly, homodimer. It depends on Mg(2+) as a cofactor.

It localises to the cytoplasm. It catalyses the reaction Endonucleolytic cleavage to 5'-phosphomonoester.. In terms of biological role, digests double-stranded RNA. Involved in the processing of primary rRNA transcript to yield the immediate precursors to the large and small rRNAs (23S and 16S). Processes some mRNAs, and tRNAs when they are encoded in the rRNA operon. Processes pre-crRNA and tracrRNA of type II CRISPR loci if present in the organism. The polypeptide is Ribonuclease 3 (Coxiella burnetii (strain CbuK_Q154) (Coxiella burnetii (strain Q154))).